A 312-amino-acid polypeptide reads, in one-letter code: 3-methyl-2-oxobutanoate hydroxymethyltransferase (312 aa).

This sequence belongs to the PanB family.

It carries out the reaction 3-methyl-2-oxobutanoate + (6R)-5,10-methylene-5,6,7,8-tetrahydrofolate + H2O = 2-dehydropantoate + (6S)-5,6,7,8-tetrahydrofolate. The protein operates within cofactor biosynthesis; (R)-pantothenate biosynthesis; (R)-pantoate from 3-methyl-2-oxobutanoate: step 1/2. Functionally, probable 3-methyl-2-oxobutanoate hydroxymethyltransferase required for pantothenic acid biosynthesis. Acts downstream in the pantothenic acid pathway. The chain is 3-methyl-2-oxobutanoate hydroxymethyltransferase from Saccharomyces cerevisiae (strain ATCC 204508 / S288c) (Baker's yeast).